The chain runs to 485 residues: UBX domain-containing protein 11 (485 aa).

The segment at 1-26 (MSSPLASLSKTRKVPLESEPVNPGRR) is disordered. A coiled-coil region spans residues 67 to 143 (HDSELLTSMA…VGEMERFLND (77 aa)). The SEP domain occupies 224–288 (LEPIPLKLYR…VSDLRNQVYP (65 aa)). In terms of domain architecture, UBX spans 386-463 (PVPPLSMLRI…GLVPNATLLL (78 aa)). Residues Ser-479 and Ser-483 each carry the phosphoserine modification.

As to quaternary structure, interacts with GNA12, GNA13, RND1, RND2 and RND3. As to expression, strongly expressed in testis. Also expressed in lung, brain and thymus.

Its subcellular location is the cytoplasm. The protein resides in the cytoskeleton. Functionally, may be involved in the reorganization of actin cytoskeleton mediated by RND1, RND2 and RND3. Promotes RHOA activation mediated by GNA12 and GNA13. The chain is UBX domain-containing protein 11 (Ubxn11) from Rattus norvegicus (Rat).